We begin with the raw amino-acid sequence, 153 residues long: Ribosomal RNA large subunit methyltransferase H (153 aa).

S-adenosyl-L-methionine contacts are provided by residues leucine 71, glycine 102, and 121–126; that span reads LSRMTL.

The protein belongs to the RNA methyltransferase RlmH family. As to quaternary structure, homodimer.

The protein localises to the cytoplasm. The catalysed reaction is pseudouridine(1915) in 23S rRNA + S-adenosyl-L-methionine = N(3)-methylpseudouridine(1915) in 23S rRNA + S-adenosyl-L-homocysteine + H(+). Specifically methylates the pseudouridine at position 1915 (m3Psi1915) in 23S rRNA. The sequence is that of Ribosomal RNA large subunit methyltransferase H from Anaeromyxobacter sp. (strain Fw109-5).